The sequence spans 269 residues: Tungstate-binding protein TupA (269 aa).

The first 17 residues, 1–17 (MKKIISLALALALSASA), serve as a signal peptide directing secretion.

The complex is composed of two ATP-binding proteins (TupC), two transmembrane proteins (TupB) and a solute-binding protein (TupA).

The protein resides in the periplasm. Part of an ABC transporter complex involved in ultra-high affinity tungstate uptake. Specifically binds tungstate. This is Tungstate-binding protein TupA from Campylobacter jejuni subsp. jejuni serotype O:2 (strain ATCC 700819 / NCTC 11168).